The sequence spans 230 residues: C-reactive protein (230 aa).

Residues 1–19 (MEKLLWCLLITISFSQAFG) form the signal peptide. Residues 24–223 (SKQAFVFPGV…DVFIKPQLWP (200 aa)) form the Pentraxin (PTX) domain. Cys55 and Cys114 are disulfide-bonded. Asn78 lines the Ca(2+) pocket. Asn147 carries N-linked (GlcNAc...) asparagine glycosylation. Glu155, Gln156, Asp157, and Gln167 together coordinate Ca(2+). Cys227 and Cys228 are disulfide-bonded.

This sequence belongs to the pentraxin family. As to quaternary structure, homopentamer; disulfide-linked. Pentraxin (or pentaxin) have a discoid arrangement of 5 non-covalently bound subunits. Two of the five chains form a dimer linked by two interchain disulfide bonds located in the C-terminal heptapeptide and specific to rat CRP. Interacts with FCN1; may regulate monocyte activation by FCN1. The cofactor is Ca(2+). Post-translationally, the last two cysteines are involved either in interchain disulfide bonds or in an intrachain bond. As to expression, found in plasma.

It localises to the secreted. Displays several functions associated with host defense: it promotes agglutination, bacterial capsular swelling, phagocytosis and complement fixation through its calcium-dependent binding to phosphorylcholine. Can interact with DNA and histones and may scavenge nuclear material released from damaged circulating cells. The protein is C-reactive protein (Crp) of Rattus norvegicus (Rat).